A 357-amino-acid polypeptide reads, in one-letter code: S-adenosylmethionine:tRNA ribosyltransferase-isomerase (357 aa).

This sequence belongs to the QueA family. Monomer.

It localises to the cytoplasm. The enzyme catalyses 7-aminomethyl-7-carbaguanosine(34) in tRNA + S-adenosyl-L-methionine = epoxyqueuosine(34) in tRNA + adenine + L-methionine + 2 H(+). Its pathway is tRNA modification; tRNA-queuosine biosynthesis. Its function is as follows. Transfers and isomerizes the ribose moiety from AdoMet to the 7-aminomethyl group of 7-deazaguanine (preQ1-tRNA) to give epoxyqueuosine (oQ-tRNA). The chain is S-adenosylmethionine:tRNA ribosyltransferase-isomerase from Edwardsiella ictaluri (strain 93-146).